The primary structure comprises 170 residues: Lipoprotein signal peptidase (170 aa).

3 helical membrane-spanning segments follow: residues 12–32 (WYWVVVLVFVADQLSKQWVLS), 67–87 (WQRWLFTFVAVGFSVVLSVWL), and 94–116 (MWRLNLAYTLVIGGALGNLIDRL). Catalysis depends on residues aspartate 123 and aspartate 141. The helical transmembrane segment at 133–153 (HFPAFNIADSAICVGAALIIL) threads the bilayer.

This sequence belongs to the peptidase A8 family.

It localises to the cell inner membrane. It catalyses the reaction Release of signal peptides from bacterial membrane prolipoproteins. Hydrolyzes -Xaa-Yaa-Zaa-|-(S,diacylglyceryl)Cys-, in which Xaa is hydrophobic (preferably Leu), and Yaa (Ala or Ser) and Zaa (Gly or Ala) have small, neutral side chains.. It functions in the pathway protein modification; lipoprotein biosynthesis (signal peptide cleavage). In terms of biological role, this protein specifically catalyzes the removal of signal peptides from prolipoproteins. The sequence is that of Lipoprotein signal peptidase from Shewanella halifaxensis (strain HAW-EB4).